A 371-amino-acid chain; its full sequence is Undecaprenyl-diphosphatase 1 (371 aa).

The next 3 membrane-spanning stretches (helical) occupy residues 53–73 (PYLAFIVAVHVATAAALIVAF), 100–120 (LAWLIILGTVPVGIVGLLLEH), and 126–146 (LGRPLPAAVFLTVNGMIMLLG). Residues 152–226 (RSTTRGAPGP…PEAEDVTLPE (75 aa)) form a disordered region. Helical transmembrane passes span 291 to 311 (FAFLLATPVILAAGLLKLPDL), 322 to 342 (QTLFGAIVAGVVAYVSIRFLA), and 351 to 371 (TPFAVYCLVAGALCVVRFGIF).

It belongs to the UppP family.

It is found in the cell membrane. It catalyses the reaction di-trans,octa-cis-undecaprenyl diphosphate + H2O = di-trans,octa-cis-undecaprenyl phosphate + phosphate + H(+). In terms of biological role, catalyzes the dephosphorylation of undecaprenyl diphosphate (UPP). Confers resistance to bacitracin. The sequence is that of Undecaprenyl-diphosphatase 1 from Frankia casuarinae (strain DSM 45818 / CECT 9043 / HFP020203 / CcI3).